The primary structure comprises 607 residues: 2-isopropylmalate synthase (607 aa).

Positions 1 to 10 are enriched in polar residues; the sequence is MASFSESLSQ. The tract at residues 1–40 is disordered; sequence MASFSESLSQDPADAYKSAPSITKPMGPPSPGQPQWNPQR. In terms of domain architecture, Pyruvate carboxyltransferase spans 75–349; the sequence is PLWCAVDLRD…DPQIDFSNID (275 aa). Positions 84, 288, 290, and 324 each coordinate Mg(2+). Residues 491 to 607 form a regulatory domain region; that stretch reads PVQPLERIKQ…VSAVNRAMPR (117 aa).

It belongs to the alpha-IPM synthase/homocitrate synthase family. LeuA type 2 subfamily. Homodimer. Requires Mg(2+) as cofactor.

The protein resides in the cytoplasm. It catalyses the reaction 3-methyl-2-oxobutanoate + acetyl-CoA + H2O = (2S)-2-isopropylmalate + CoA + H(+). It participates in amino-acid biosynthesis; L-leucine biosynthesis; L-leucine from 3-methyl-2-oxobutanoate: step 1/4. Catalyzes the condensation of the acetyl group of acetyl-CoA with 3-methyl-2-oxobutanoate (2-ketoisovalerate) to form 3-carboxy-3-hydroxy-4-methylpentanoate (2-isopropylmalate). The polypeptide is 2-isopropylmalate synthase (Mycobacterium leprae (strain TN)).